The primary structure comprises 31 residues: Cytochrome b6-f complex subunit 6 (31 aa).

A helical membrane pass occupies residues 4–26; that stretch reads ITSYFGFLLAASTITPALFIGLS.

This sequence belongs to the PetL family. As to quaternary structure, the 4 large subunits of the cytochrome b6-f complex are cytochrome b6, subunit IV (17 kDa polypeptide, PetD), cytochrome f and the Rieske protein, while the 4 small subunits are PetG, PetL, PetM and PetN. The complex functions as a dimer.

It is found in the plastid. The protein resides in the chloroplast thylakoid membrane. Its function is as follows. Component of the cytochrome b6-f complex, which mediates electron transfer between photosystem II (PSII) and photosystem I (PSI), cyclic electron flow around PSI, and state transitions. PetL is important for photoautotrophic growth as well as for electron transfer efficiency and stability of the cytochrome b6-f complex. This Buxus microphylla (Littleleaf boxwood) protein is Cytochrome b6-f complex subunit 6.